The primary structure comprises 28 residues: Dermaseptin-SP1 (28 aa).

Expressed by the skin glands.

It localises to the secreted. In terms of biological role, probable antimicrobial peptide which stimulates insulin-release in glucose-responsive BRIN-BD 11 cells. The chain is Dermaseptin-SP1 from Agalychnis spurrelli (Gliding leaf frog).